The primary structure comprises 674 residues: PTS system glucose-specific EIIBCA component (674 aa).

The region spanning 1–89 (MASKLTTTSQ…LKLDGMKHFA (89 aa)) is the PTS EIIB type-1 domain. The active-site Phosphocysteine intermediate; for EIIB activity is the Cys28. One can recognise a PTS EIIC type-1 domain in the interval 117–476 (EFLSDTFRPI…DAERDEAKAQ (360 aa)). 10 consecutive transmembrane segments (helical) span residues 126 to 146 (ILWA…ADTF), 162 to 182 (YVFL…MVGA), 193 to 213 (WIGA…LGSA), 225 to 245 (VLND…GLYW), 260 to 280 (MVFV…FLLG), 303 to 323 (FILS…GLHW), 344 to 364 (PMGA…LIAL), 376 to 396 (LGGM…YGVL), 409 to 429 (GCLV…AFVF), and 442 to 462 (LGYT…VLFF). Residues 542 to 646 (DPIFAAGKLG…PLITPVVVSN (105 aa)) enclose the PTS EIIA type-1 domain. His594 serves as the catalytic Tele-phosphohistidine intermediate; for EIIA activity.

The protein resides in the cell membrane. The enzyme catalyses N(pros)-phospho-L-histidyl-[protein] + D-glucose(out) = D-glucose 6-phosphate(in) + L-histidyl-[protein]. Functionally, the phosphoenolpyruvate-dependent sugar phosphotransferase system (sugar PTS), a major carbohydrate active transport system, catalyzes the phosphorylation of incoming sugar substrates concomitantly with their translocation across the cell membrane. This system is involved in glucose transport. The chain is PTS system glucose-specific EIIBCA component (ptsG) from Corynebacterium glutamicum (Brevibacterium saccharolyticum).